A 318-amino-acid polypeptide reads, in one-letter code: NLP effector protein 9 (318 aa).

An N-terminal signal peptide occupies residues 1–19 (MRLFAFLWSSVAFLSTVQA). Over residues 24 to 35 (TASQTQDDSSTP) the composition is skewed to low complexity. Disordered regions lie at residues 24–43 (TASQ…PDKY) and 50–93 (LRTK…PAPT). A compositionally biased stretch (polar residues) spans 55–65 (PMATPNRTIMP). Asparagine 60 carries N-linked (GlcNAc...) asparagine glycosylation. Positions 73 to 93 (PEPPTPEPTYLPTLSPTPAPT) are enriched in pro residues. Positions 185 to 195 (AIMYSWYFPKD) match the Conserved undecapeptide motif I motif. The Hepta-peptide GHRHDWE motif II signature appears at 202 to 208 (GHRHDWE).

Belongs to the Necrosis inducing protein (NPP1) family.

Its subcellular location is the secreted. Its function is as follows. Secreted effector that contributes to virulence during infection by P.capsici. Induces distinct chlorosis at 3 days after inoculation of host C.annuum leaves, and all the chlorotic areas gradually turn brown and become moderately necrotic at 7 days after inoculation. Caused only small necrotic areas at 7 days after non-host N.benthamiana leaves infection. In Phytophthora capsici, this protein is NLP effector protein 9.